The primary structure comprises 127 residues: Small ribosomal subunit protein uS13 (127 aa).

The tract at residues 97–127 (PVRGQRTRTNARTRRGGRKTVAGKKKAAAKK) is disordered. Residues 101–127 (QRTRTNARTRRGGRKTVAGKKKAAAKK) are compositionally biased toward basic residues.

It belongs to the universal ribosomal protein uS13 family. In terms of assembly, part of the 30S ribosomal subunit. Forms a loose heterodimer with protein S19. Forms two bridges to the 50S subunit in the 70S ribosome.

Its function is as follows. Located at the top of the head of the 30S subunit, it contacts several helices of the 16S rRNA. In the 70S ribosome it contacts the 23S rRNA (bridge B1a) and protein L5 of the 50S subunit (bridge B1b), connecting the 2 subunits; these bridges are implicated in subunit movement. Contacts the tRNAs in the A and P-sites. The sequence is that of Small ribosomal subunit protein uS13 from Gloeobacter violaceus (strain ATCC 29082 / PCC 7421).